Reading from the N-terminus, the 202-residue chain is Outer-membrane lipoprotein carrier protein (202 aa).

A signal peptide spans 1-18; sequence MNKLFLILLLIFSHEVFS.

It belongs to the LolA family. As to quaternary structure, monomer.

The protein localises to the periplasm. Functionally, participates in the translocation of lipoproteins from the inner membrane to the outer membrane. Only forms a complex with a lipoprotein if the residue after the N-terminal Cys is not an aspartate (The Asp acts as a targeting signal to indicate that the lipoprotein should stay in the inner membrane). In Legionella pneumophila (strain Paris), this protein is Outer-membrane lipoprotein carrier protein.